Consider the following 392-residue polypeptide: Major outer membrane porin (392 aa).

The N-terminal stretch at 1-22 (MKKLLKSALLFAAAGSALSLQA) is a signal peptide.

It belongs to the chlamydial porin (CP) (TC 1.B.2) family. In terms of assembly, part of a disulfide cross-linked outer membrane complex (COMC) composed of the major outer membrane porin (MOMP), the small cysteine-rich protein (OmcA) and the large cysteine-rich periplasmic protein (OmcB).

The protein localises to the cell outer membrane. In terms of biological role, in elementary bodies (EBs, the infectious stage, which is able to survive outside the host cell) provides the structural integrity of the outer envelope through disulfide cross-links with the small cysteine-rich protein and the large cysteine-rich periplasmic protein. It has been described in publications as the Sarkosyl-insoluble COMC (Chlamydia outer membrane complex), and serves as the functional equivalent of peptidoglycan. Its function is as follows. Permits diffusion of specific solutes through the outer membrane. In Chlamydia psittaci (Chlamydophila psittaci), this protein is Major outer membrane porin (ompA).